We begin with the raw amino-acid sequence, 96 residues long: Prokineticin Bm8-b (96 aa).

Positions 1–19 (MKCFAQIVVLLLVIAFSHG) are cleaved as a signal peptide. Cystine bridges form between Cys32–Cys50, Cys37–Cys78, Cys60–Cys86, and Cys80–Cys95.

It belongs to the AVIT (prokineticin) family. In terms of tissue distribution, expressed by the skin glands.

The protein localises to the secreted. Functionally, potent agonist for both PKR1/PROKR1 and PKR2/PROKR2, and inducer of a potent and long-lasting hyperalgesia. Also potentiates capsaicin-induced TRPV1 current, when tested on DRG neurons. At subnanomolar concentrations, this protein both induces potent chemotaxis of macrophages and stimulates LPS-induced production of the pro-inflammatory cytokines IL-1 and IL-12. In vivo, potently stimulates the contraction of the guinea-pig gastrointestinal (GI) smooth muscle (nanomolar concentration). The chain is Prokineticin Bm8-b from Bombina maxima (Giant fire-bellied toad).